A 253-amino-acid chain; its full sequence is Tabinhibitin 3 (253 aa).

The signal sequence occupies residues 1 to 22; the sequence is MTLKRIFCAALALIVLQSVASA. One can recognise an SCP domain in the interval 66 to 209; the sequence is LQKTNWLRGV…LKRALFTCNF (144 aa). The Cell attachment site signature appears at 222-224; it reads RGD.

It belongs to the CRISP family. In terms of tissue distribution, expressed in salivary glands.

It is found in the secreted. Inhibits platelet aggregation induced by all agonists tested (ADP, arachidonic acid, the thromboxane A2 analog U46619, thrombin, and snake venom snaclecs (TMVA that activates platelet through GPIB, and stejnulxin that specifically acts through GPVI (GP6))). May act by competing with fibrinogen for binding to glycoprotein IIb/IIIa (ITGA2B/ITGB3). The polypeptide is Tabinhibitin 3 (Tabanus yao (Horsefly)).